We begin with the raw amino-acid sequence, 261 residues long: Carnitinyl-CoA dehydratase (261 aa).

E111 serves as the catalytic Nucleophile. E131 serves as the catalytic Proton acceptor.

Belongs to the enoyl-CoA hydratase/isomerase family.

It catalyses the reaction (R)-carnitinyl-CoA = crotonobetainyl-CoA + H2O. It functions in the pathway amine and polyamine metabolism; carnitine metabolism. Catalyzes the reversible dehydration of L-carnitinyl-CoA to crotonobetainyl-CoA. This Escherichia coli O6:K15:H31 (strain 536 / UPEC) protein is Carnitinyl-CoA dehydratase.